Here is a 425-residue protein sequence, read N- to C-terminus: Histidine--tRNA ligase (425 aa).

This sequence belongs to the class-II aminoacyl-tRNA synthetase family. Homodimer.

It is found in the cytoplasm. The catalysed reaction is tRNA(His) + L-histidine + ATP = L-histidyl-tRNA(His) + AMP + diphosphate + H(+). This is Histidine--tRNA ligase from Tolumonas auensis (strain DSM 9187 / NBRC 110442 / TA 4).